The chain runs to 388 residues: MRYLTAGESHGPGLTTIIEGLPAGMPLLAEDVNKELKRRQGGHGRGARMRIEKDQVQITAGIRHGKTLGAPVAMFVENKDWKHWETVMSIEPVPEKNEKSRRVSRPRPGHADLVGGMKYGHNDMRNVLERSSARETTVRVAAGAIAKKLLHELGIEVAGHVLEIGGTRANLTRDFSVSEIKETSEASPVRCLDEVAEKEMMQKIDDAKKNGDTIGGIVEVVVGGVPAGLGSYVQWDKKLDAKIARAIVSINAFKGAEFGVGFEAARKPGSEVMDEILWSKEDGYTRRTNNLGGFEGGMTNGMPIVVRGVMKPIPTLYKPLQSVDIDSKETFNASVERSDSCAVPAASVVAEAVVAWEVAVAVLEKFDGDRFDTLKKHVEEHRNLTKEF.

NADP(+) is bound by residues arginine 39 and arginine 45. Positions 95 to 118 (EKNEKSRRVSRPRPGHADLVGGMK) are disordered. FMN contacts are provided by residues 130–132 (RSS), 251–252 (NA), glycine 296, 311–315 (KPIPT), and arginine 337.

It belongs to the chorismate synthase family. As to quaternary structure, homotetramer. FMNH2 serves as cofactor.

It carries out the reaction 5-O-(1-carboxyvinyl)-3-phosphoshikimate = chorismate + phosphate. It participates in metabolic intermediate biosynthesis; chorismate biosynthesis; chorismate from D-erythrose 4-phosphate and phosphoenolpyruvate: step 7/7. In terms of biological role, catalyzes the anti-1,4-elimination of the C-3 phosphate and the C-6 proR hydrogen from 5-enolpyruvylshikimate-3-phosphate (EPSP) to yield chorismate, which is the branch point compound that serves as the starting substrate for the three terminal pathways of aromatic amino acid biosynthesis. This reaction introduces a second double bond into the aromatic ring system. The chain is Chorismate synthase from Listeria welshimeri serovar 6b (strain ATCC 35897 / DSM 20650 / CCUG 15529 / CIP 8149 / NCTC 11857 / SLCC 5334 / V8).